The sequence spans 225 residues: Membrane protein (225 aa).

At 1-20 (MSNETNCTLDFEQSVELFKE) the chain is on the virion surface side. A helical transmembrane segment spans residues 21 to 41 (YNLFITAFLLFLTIILQYGYA). The Intravirion segment spans residues 42–51 (TRSKFIYILK). A helical transmembrane segment spans residues 52 to 72 (MIVLWCFWPLNIAVGVISCIY). At 73-77 (PPNTG) the chain is on the virion surface side. Residues 78–98 (GLVAAIILTVFACLSFVGYWI) traverse the membrane as a helical segment. Topologically, residues 99-225 (QSIRLFKRCR…VATGGSSLYT (127 aa)) are intravirion.

The protein belongs to the gammacoronaviruses M protein family. Homomultimer. Interacts with envelope E protein in the budding compartment of the host cell, which is located between endoplasmic reticulum and the Golgi complex. Forms a complex with HE and S proteins. Interacts with nucleocapsid N protein. This interaction probably participates in RNA packaging into the virus.

The protein localises to the virion membrane. It is found in the host Golgi apparatus membrane. In terms of biological role, component of the viral envelope that plays a central role in virus morphogenesis and assembly via its interactions with other viral proteins. The protein is Membrane protein of Gallus gallus (Chicken).